The sequence spans 111 residues: MKKSNNKNNHKNNHNNNQGGENIRVRSPRRGEIPGVVEQILGHGKLKVRCNDKQIRLCRIPGKMKKRIWIREGDVVLVKPWDFQSDEKADVIWRYTRTEANYLERRGFLKI.

Positions 1–13 are enriched in basic residues; it reads MKKSNNKNNHKNN. Residues 1–30 are disordered; sequence MKKSNNKNNHKNNHNNNQGGENIRVRSPRR. Residues 23-96 form the S1-like domain; sequence IRVRSPRRGE…EKADVIWRYT (74 aa).

It belongs to the eIF-1A family.

In terms of biological role, seems to be required for maximal rate of protein biosynthesis. Enhances ribosome dissociation into subunits and stabilizes the binding of the initiator Met-tRNA(I) to 40 S ribosomal subunits. This chain is Translation initiation factor 1A, found in Methanosphaera stadtmanae (strain ATCC 43021 / DSM 3091 / JCM 11832 / MCB-3).